We begin with the raw amino-acid sequence, 135 residues long: Ribonuclease P protein component (135 aa).

The protein belongs to the RnpA family. In terms of assembly, consists of a catalytic RNA component (M1 or rnpB) and a protein subunit.

The enzyme catalyses Endonucleolytic cleavage of RNA, removing 5'-extranucleotides from tRNA precursor.. In terms of biological role, RNaseP catalyzes the removal of the 5'-leader sequence from pre-tRNA to produce the mature 5'-terminus. It can also cleave other RNA substrates such as 4.5S RNA. The protein component plays an auxiliary but essential role in vivo by binding to the 5'-leader sequence and broadening the substrate specificity of the ribozyme. This is Ribonuclease P protein component from Pseudomonas aeruginosa (strain ATCC 15692 / DSM 22644 / CIP 104116 / JCM 14847 / LMG 12228 / 1C / PRS 101 / PAO1).